The sequence spans 378 residues: Probable dihydroorotase-like protein (378 aa).

This sequence belongs to the metallo-dependent hydrolases superfamily. DHOase family. PyrC' subfamily.

In terms of biological role, non-functional DHOase. The sequence is that of Probable dihydroorotase-like protein (pyrC') from Helicobacter pylori (strain ATCC 700392 / 26695) (Campylobacter pylori).